Reading from the N-terminus, the 459-residue chain is uncharacterized protein (459 aa).

This is an uncharacterized protein from Orgyia pseudotsugata (Douglas-fir tussock moth).